The primary structure comprises 298 residues: Uricase (298 aa).

Active-site charge relay system residues include Lys-18 and Thr-63. Urate contacts are provided by Thr-63, Asp-64, Phe-165, Arg-182, Val-229, Gln-230, and Asn-256. His-258 acts as the Charge relay system in catalysis. The Microbody targeting signal motif lies at 296 to 298; sequence ARM.

Belongs to the uricase family. In terms of assembly, homotetramer; dimer of dimers.

It is found in the peroxisome. It carries out the reaction urate + O2 + H2O = 5-hydroxyisourate + H2O2. Its pathway is purine metabolism; urate degradation; (S)-allantoin from urate: step 1/3. Its activity is regulated as follows. Competitively inhibited by xanthine. Functionally, catalyzes the oxidation of uric acid to 5-hydroxyisourate, which is further processed to form (S)-allantoin. The sequence is that of Uricase from Danio rerio (Zebrafish).